The chain runs to 1099 residues: DNA-directed RNA polymerase subunit beta (1099 aa).

This sequence belongs to the RNA polymerase beta chain family. In terms of assembly, in plastids the minimal PEP RNA polymerase catalytic core is composed of four subunits: alpha, beta, beta', and beta''. When a (nuclear-encoded) sigma factor is associated with the core the holoenzyme is formed, which can initiate transcription.

It localises to the plastid. It is found in the chloroplast. It carries out the reaction RNA(n) + a ribonucleoside 5'-triphosphate = RNA(n+1) + diphosphate. Functionally, DNA-dependent RNA polymerase catalyzes the transcription of DNA into RNA using the four ribonucleoside triphosphates as substrates. This chain is DNA-directed RNA polymerase subunit beta, found in Bigelowiella natans (Pedinomonas minutissima).